The primary structure comprises 173 residues: dCTP deaminase, dUMP-forming (173 aa).

DCTP is bound by residues 93-98 (RSSIGR), Asp-111, 119-121 (TLE), Gln-138, and Tyr-151. The active-site Proton donor/acceptor is Glu-121.

It belongs to the dCTP deaminase family. As to quaternary structure, homotrimer.

It catalyses the reaction dCTP + 2 H2O = dUMP + NH4(+) + diphosphate. It participates in pyrimidine metabolism; dUMP biosynthesis; dUMP from dCTP: step 1/1. Functionally, bifunctional enzyme that catalyzes both the deamination of dCTP to dUTP and the hydrolysis of dUTP to dUMP without releasing the toxic dUTP intermediate. The polypeptide is dCTP deaminase, dUMP-forming (Clostridium acetobutylicum (strain ATCC 824 / DSM 792 / JCM 1419 / IAM 19013 / LMG 5710 / NBRC 13948 / NRRL B-527 / VKM B-1787 / 2291 / W)).